The following is a 352-amino-acid chain: Biotin synthase (352 aa).

Residues 41–268 (NEVQVSTLLS…ASHVRLSAGR (228 aa)) enclose the Radical SAM core domain. Cysteine 56, cysteine 60, and cysteine 63 together coordinate [4Fe-4S] cluster. [2Fe-2S] cluster-binding residues include cysteine 100, cysteine 131, cysteine 191, and arginine 263.

Belongs to the radical SAM superfamily. Biotin synthase family. As to quaternary structure, homodimer. It depends on [4Fe-4S] cluster as a cofactor. Requires [2Fe-2S] cluster as cofactor.

It catalyses the reaction (4R,5S)-dethiobiotin + (sulfur carrier)-SH + 2 reduced [2Fe-2S]-[ferredoxin] + 2 S-adenosyl-L-methionine = (sulfur carrier)-H + biotin + 2 5'-deoxyadenosine + 2 L-methionine + 2 oxidized [2Fe-2S]-[ferredoxin]. It functions in the pathway cofactor biosynthesis; biotin biosynthesis; biotin from 7,8-diaminononanoate: step 2/2. Catalyzes the conversion of dethiobiotin (DTB) to biotin by the insertion of a sulfur atom into dethiobiotin via a radical-based mechanism. In Marinobacter nauticus (strain ATCC 700491 / DSM 11845 / VT8) (Marinobacter aquaeolei), this protein is Biotin synthase.